Here is a 499-residue protein sequence, read N- to C-terminus: Proline dehydrogenase 1, mitochondrial (499 aa).

Residues 1–72 constitute a mitochondrion transit peptide; the sequence is MATRLLRTNF…LDLSDQARLF (72 aa).

It belongs to the proline oxidase family. FAD is required as a cofactor. In terms of tissue distribution, ubiquitous. Highest expression in pollen grains, in the stigma and in developing embryos.

The protein localises to the mitochondrion. The catalysed reaction is L-proline + a quinone = (S)-1-pyrroline-5-carboxylate + a quinol + H(+). It participates in amino-acid degradation; L-proline degradation into L-glutamate; L-glutamate from L-proline: step 1/2. Functionally, converts proline to delta-1-pyrroline-5-carboxylate. The protein is Proline dehydrogenase 1, mitochondrial (POX1) of Arabidopsis thaliana (Mouse-ear cress).